Here is a 201-residue protein sequence, read N- to C-terminus: LexA repressor (201 aa).

The segment at residues 28–48 (RAEIANQLGFRSANAAEEHLK) is a DNA-binding region (H-T-H motif). Residues S118 and K155 each act as for autocatalytic cleavage activity in the active site.

Belongs to the peptidase S24 family. In terms of assembly, homodimer.

The enzyme catalyses Hydrolysis of Ala-|-Gly bond in repressor LexA.. Its function is as follows. Represses a number of genes involved in the response to DNA damage (SOS response), including recA and lexA. In the presence of single-stranded DNA, RecA interacts with LexA causing an autocatalytic cleavage which disrupts the DNA-binding part of LexA, leading to derepression of the SOS regulon and eventually DNA repair. The chain is LexA repressor from Saccharophagus degradans (strain 2-40 / ATCC 43961 / DSM 17024).